A 294-amino-acid chain; its full sequence is MAIRLYRAYTPGTRNRTVSTFSEITTDKPEKSLINKHHFCKGRNNRGVITCRHKGGGHKQRYRLIDFKRNRHNIIAKVASIEYDPNRNARIALLHYLDGEKRYILHPRSLSVGAIVVSGPMAPIEVGNALPLSTIPLGTAVHNIELRPYCGGQIVRSAGTYAQIVAKEGNFVTVKLPSSEVRMIRKECYATIGQVGNIDASNITLGKAGRSRWLGKRPTVRGVVMNPVDHPHGGGGEGKSPIGRSRPVTPWGKPALGVKTRNPNKYSNPYVLLVVNKVYLTYNLILKYNVEINT.

The disordered stretch occupies residues 224–249 (VMNPVDHPHGGGGEGKSPIGRSRPVT).

The protein belongs to the universal ribosomal protein uL2 family. Part of the 50S ribosomal subunit.

It localises to the plastid. It is found in the chloroplast. This is Large ribosomal subunit protein uL2c (rpl2) from Porphyra purpurea (Red seaweed).